The following is a 759-amino-acid chain: Spindle pole body component alp16 (759 aa).

In terms of assembly, interacts with gamma-tubulin.

Its subcellular location is the cytoplasm. The protein localises to the cytoskeleton. The protein resides in the microtubule organizing center. It localises to the spindle pole body. In terms of biological role, component of the gamma tubule complex that is required for the regulation of both interphase microtubules and mitotic bipolar spindles. The chain is Spindle pole body component alp16 (alp16) from Schizosaccharomyces pombe (strain 972 / ATCC 24843) (Fission yeast).